A 166-amino-acid chain; its full sequence is NAD(P)H-quinone oxidoreductase subunit I, chloroplastic (166 aa).

4Fe-4S ferredoxin-type domains follow at residues 55 to 84 and 95 to 124; these read GRIHFEFDKCIACEVCVRVCPIDLPVVDWK and LNYSIDFGICIFCGNCVEYCPTNCLSMTEE. The [4Fe-4S] cluster site is built by Cys64, Cys67, Cys70, Cys74, Cys104, Cys107, Cys110, and Cys114.

Belongs to the complex I 23 kDa subunit family. NDH is composed of at least 16 different subunits, 5 of which are encoded in the nucleus. [4Fe-4S] cluster serves as cofactor.

The protein localises to the plastid. The protein resides in the chloroplast thylakoid membrane. The catalysed reaction is a plastoquinone + NADH + (n+1) H(+)(in) = a plastoquinol + NAD(+) + n H(+)(out). It carries out the reaction a plastoquinone + NADPH + (n+1) H(+)(in) = a plastoquinol + NADP(+) + n H(+)(out). NDH shuttles electrons from NAD(P)H:plastoquinone, via FMN and iron-sulfur (Fe-S) centers, to quinones in the photosynthetic chain and possibly in a chloroplast respiratory chain. The immediate electron acceptor for the enzyme in this species is believed to be plastoquinone. Couples the redox reaction to proton translocation, and thus conserves the redox energy in a proton gradient. In Tridax balbisioides (Coatbuttons), this protein is NAD(P)H-quinone oxidoreductase subunit I, chloroplastic.